Here is a 377-residue protein sequence, read N- to C-terminus: Alanine racemase (377 aa).

Catalysis depends on lysine 37, which acts as the Proton acceptor; specific for D-alanine. Lysine 37 is subject to N6-(pyridoxal phosphate)lysine. Arginine 135 contributes to the substrate binding site. The active-site Proton acceptor; specific for L-alanine is tyrosine 271. Residue methionine 319 participates in substrate binding.

It belongs to the alanine racemase family. Requires pyridoxal 5'-phosphate as cofactor.

It catalyses the reaction L-alanine = D-alanine. The protein operates within amino-acid biosynthesis; D-alanine biosynthesis; D-alanine from L-alanine: step 1/1. Catalyzes the interconversion of L-alanine and D-alanine. May also act on other amino acids. This is Alanine racemase (alr) from Helicobacter pylori (strain G27).